Consider the following 331-residue polypeptide: MIDTSIPLVDLHRHLDGNVRVETIWDLGHQHNIALPADTLEGLAPFVQIQGKESSLVAFLKKLDWMVAVLADLDAVKRVAYENVADAAISGLDYAELRFSPYYMAMNHKLPIEGVVEAVIDGVKAGLKDYEVKINLIGIMSRSFGQDACMQELEALLAHKQHLVAMDLAGDELGFPGALFNDHFKKVRDAGLAITAHAGEAAGAESMWQAIQELGATRIGHGVNAIHDPKLMEYLAANRIGIESCPTSNLHTSTVTSYQEHPLRTFMEAGVLIGLNTDDPGVSAIDIKHEYRTVKQEMGFSDAELAQLQRNGVEMAFISDSERKALYAAKA.

Residues His-12 and His-14 each coordinate Zn(2+). Positions 14, 16, and 170 each coordinate substrate. His-197 is a Zn(2+) binding site. Residue Glu-200 is the Proton donor of the active site. Zn(2+) is bound at residue Asp-278. Asp-279 is a binding site for substrate.

Belongs to the metallo-dependent hydrolases superfamily. Adenosine and AMP deaminases family. Adenosine deaminase subfamily. It depends on Zn(2+) as a cofactor.

It catalyses the reaction adenosine + H2O + H(+) = inosine + NH4(+). It carries out the reaction 2'-deoxyadenosine + H2O + H(+) = 2'-deoxyinosine + NH4(+). In terms of biological role, catalyzes the hydrolytic deamination of adenosine and 2-deoxyadenosine. The protein is Adenosine deaminase of Shewanella loihica (strain ATCC BAA-1088 / PV-4).